A 512-amino-acid polypeptide reads, in one-letter code: ATP synthase subunit alpha (512 aa).

169–176 (GDRQTGKT) is a binding site for ATP.

It belongs to the ATPase alpha/beta chains family. As to quaternary structure, F-type ATPases have 2 components, CF(1) - the catalytic core - and CF(0) - the membrane proton channel. CF(1) has five subunits: alpha(3), beta(3), gamma(1), delta(1), epsilon(1). CF(0) has three main subunits: a(1), b(2) and c(9-12). The alpha and beta chains form an alternating ring which encloses part of the gamma chain. CF(1) is attached to CF(0) by a central stalk formed by the gamma and epsilon chains, while a peripheral stalk is formed by the delta and b chains.

The protein localises to the cell inner membrane. It carries out the reaction ATP + H2O + 4 H(+)(in) = ADP + phosphate + 5 H(+)(out). Produces ATP from ADP in the presence of a proton gradient across the membrane. The alpha chain is a regulatory subunit. The chain is ATP synthase subunit alpha from Orientia tsutsugamushi (strain Ikeda) (Rickettsia tsutsugamushi).